A 301-amino-acid chain; its full sequence is PWI domain-containing protein C825.05c (301 aa).

The PWI domain occupies 26-137; that stretch reads STKFPASYDT…YGIPEKFILE (112 aa). A Phosphoserine modification is found at S86. Composition is skewed to basic and acidic residues over residues 145–182, 189–205, and 215–229; these read LKDR…ERNG, TLDR…ERNR, and RFSE…DIRS. The disordered stretch occupies residues 145–301; that stretch reads LKDRTEASKE…ESDSGTQKHD (157 aa). Residue S199 is modified to Phosphoserine. The segment covering 244–253 has biased composition (basic residues); the sequence is PTRRRERHYR. Residues 254-289 show a composition bias toward basic and acidic residues; that stretch reads TRDDEGFDEFGRSRDGRWRESRTSYREKHRYDRDAL. Polar residues predominate over residues 290-301; that stretch reads SSESDSGTQKHD. S291 is subject to Phosphoserine.

It localises to the nucleus. The sequence is that of PWI domain-containing protein C825.05c from Schizosaccharomyces pombe (strain 972 / ATCC 24843) (Fission yeast).